Here is a 248-residue protein sequence, read N- to C-terminus: Octanoyltransferase (248 aa).

Residues 53 to 234 (ADTVDEIWIV…RLIANLDGES (182 aa)) form the BPL/LPL catalytic domain. Residues 93–100 (RGGQITYH), 165–167 (ALG), and 178–180 (GLS) contribute to the substrate site. The active-site Acyl-thioester intermediate is cysteine 196.

It belongs to the LipB family.

The protein resides in the cytoplasm. The catalysed reaction is octanoyl-[ACP] + L-lysyl-[protein] = N(6)-octanoyl-L-lysyl-[protein] + holo-[ACP] + H(+). It functions in the pathway protein modification; protein lipoylation via endogenous pathway; protein N(6)-(lipoyl)lysine from octanoyl-[acyl-carrier-protein]: step 1/2. Catalyzes the transfer of endogenously produced octanoic acid from octanoyl-acyl-carrier-protein onto the lipoyl domains of lipoate-dependent enzymes. Lipoyl-ACP can also act as a substrate although octanoyl-ACP is likely to be the physiological substrate. The polypeptide is Octanoyltransferase (Burkholderia multivorans (strain ATCC 17616 / 249)).